The sequence spans 193 residues: Ribonuclease HII (193 aa).

The 179-residue stretch at 15-193 folds into the RNase H type-2 domain; that stretch reads CIVAGIDEAG…PYHRRSFRCC (179 aa). A divalent metal cation is bound by residues Asp21, Glu22, and Asp112.

Belongs to the RNase HII family. Requires Mn(2+) as cofactor. It depends on Mg(2+) as a cofactor.

The protein localises to the cytoplasm. It catalyses the reaction Endonucleolytic cleavage to 5'-phosphomonoester.. Endonuclease that specifically degrades the RNA of RNA-DNA hybrids. The sequence is that of Ribonuclease HII from Rickettsia conorii (strain ATCC VR-613 / Malish 7).